The following is a 333-amino-acid chain: Abequosyltransferase RfbV (333 aa).

It belongs to the glycosyltransferase 2 family.

It catalyses the reaction CDP-alpha-D-abequose + alpha-D-Man-(1-&gt;4)-alpha-L-Rha-(1-&gt;3)-alpha-D-Gal-di-trans,octa-cis-undecaprenyl diphosphate = alpha-D-Abe-(1-&gt;3)-alpha-D-Man-(1-&gt;4)-alpha-L-Rha-(1-&gt;3)-alpha-D-Gal-di-trans,octa-cis-undecaprenyl diphosphate + CDP + H(+). The protein operates within bacterial outer membrane biogenesis; LPS O-antigen biosynthesis. Its function is as follows. Catalyzes the transfer of CDP-abequose on D-mannosyl-L-rhamnosyl-D-galactose-1-diphospholipid to yield D-abequosyl-D-mannosyl-rhamnosyl-D-galactose-1-diphospholipid. In Salmonella typhimurium (strain LT2 / SGSC1412 / ATCC 700720), this protein is Abequosyltransferase RfbV (rfbV).